Here is a 77-residue protein sequence, read N- to C-terminus: Acyl carrier protein (77 aa).

The region spanning 2–77 is the Carrier domain; the sequence is ADVLERVTKI…DAVNYIKSRL (76 aa). O-(pantetheine 4'-phosphoryl)serine is present on Ser37.

This sequence belongs to the acyl carrier protein (ACP) family. Post-translationally, 4'-phosphopantetheine is transferred from CoA to a specific serine of apo-ACP by AcpS. This modification is essential for activity because fatty acids are bound in thioester linkage to the sulfhydryl of the prosthetic group.

The protein resides in the cytoplasm. It functions in the pathway lipid metabolism; fatty acid biosynthesis. Functionally, carrier of the growing fatty acid chain in fatty acid biosynthesis. The protein is Acyl carrier protein of Geobacillus kaustophilus (strain HTA426).